The sequence spans 156 residues: MADPEKQGPAESRAEDEVMEGAQGGEDAATGDSAAAPAAEEPQAPAENAPKPKKDFMESLPNSVKCRVLALKKLQKRCDKIEAKFDKEFQALEKKYNDIYKPLLAKIQELTGEMEGCAWTLEGEDDEDDEEEDDEEEEEEEEAAAGATGGPNFAKK.

A compositionally biased stretch (basic and acidic residues) spans 1 to 16; the sequence is MADPEKQGPAESRAED. The interval 1–58 is disordered; it reads MADPEKQGPAESRAEDEVMEGAQGGEDAATGDSAAAPAAEEPQAPAENAPKPKKDFME. Low complexity predominate over residues 34–49; sequence AAAPAAEEPQAPAENA. Positions 68 to 94 form a coiled coil; the sequence is VLALKKLQKRCDKIEAKFDKEFQALEK. Residues 120–156 form a disordered region; that stretch reads TLEGEDDEDDEEEDDEEEEEEEEAAAGATGGPNFAKK. Over residues 122–143 the composition is skewed to acidic residues; the sequence is EGEDDEDDEEEDDEEEEEEEEA.

Belongs to the nucleosome assembly protein (NAP) family.

Its subcellular location is the nucleus. This chain is Nucleosome assembly protein 1-like 5 (Nap1l5), found in Mus musculus (Mouse).